The chain runs to 401 residues: Exodeoxyribonuclease 7 large subunit (401 aa).

This sequence belongs to the XseA family. In terms of assembly, heterooligomer composed of large and small subunits.

Its subcellular location is the cytoplasm. The catalysed reaction is Exonucleolytic cleavage in either 5'- to 3'- or 3'- to 5'-direction to yield nucleoside 5'-phosphates.. Bidirectionally degrades single-stranded DNA into large acid-insoluble oligonucleotides, which are then degraded further into small acid-soluble oligonucleotides. The chain is Exodeoxyribonuclease 7 large subunit from Clostridium botulinum (strain Hall / ATCC 3502 / NCTC 13319 / Type A).